Consider the following 435-residue polypeptide: tRNA-2-methylthio-N(6)-dimethylallyladenosine synthase (435 aa).

The region spanning Met-1–Val-117 is the MTTase N-terminal domain. The [4Fe-4S] cluster site is built by Cys-10, Cys-46, Cys-80, Cys-156, Cys-160, and Cys-163. Positions Arg-142 to Lys-370 constitute a Radical SAM core domain. The 61-residue stretch at Gln-373–Asn-433 folds into the TRAM domain.

This sequence belongs to the methylthiotransferase family. MiaB subfamily. Monomer. [4Fe-4S] cluster is required as a cofactor.

It is found in the cytoplasm. The catalysed reaction is N(6)-dimethylallyladenosine(37) in tRNA + (sulfur carrier)-SH + AH2 + 2 S-adenosyl-L-methionine = 2-methylsulfanyl-N(6)-dimethylallyladenosine(37) in tRNA + (sulfur carrier)-H + 5'-deoxyadenosine + L-methionine + A + S-adenosyl-L-homocysteine + 2 H(+). Catalyzes the methylthiolation of N6-(dimethylallyl)adenosine (i(6)A), leading to the formation of 2-methylthio-N6-(dimethylallyl)adenosine (ms(2)i(6)A) at position 37 in tRNAs that read codons beginning with uridine. In Hydrogenobaculum sp. (strain Y04AAS1), this protein is tRNA-2-methylthio-N(6)-dimethylallyladenosine synthase.